Reading from the N-terminus, the 160-residue chain is Major strawberry allergen Fra a 1-2 (160 aa).

It belongs to the BetVI family. As to quaternary structure, monomer. Interacts with AP. Highly expressed in ripe red fruits. Expressed in roots and white fruits. Expressed at low levels in open flowers.

Its function is as follows. Involved in the control of flavonoid biosynthesis in fruits, probably by binding directly to natural flavonoids. Binds the natural flavonoid myricetin with affinities in the low micromolar range. The polypeptide is Major strawberry allergen Fra a 1-2 (Fragaria ananassa (Strawberry)).